A 341-amino-acid chain; its full sequence is MNKLILISLIASLYQVEVDAHGYMTFPIARQRRCSAAGGNWYPVGGGGIQDPMCRAAYQNVFNKVLNSNGGDVIDASEAANYMYTQDNEYAALAGPDYTNICHIQQRVVPSYLCAAGASDWSIRPFGDKSGMDLPGSWTPTIIQLSDNQQSNVVMELEFCPTAVHDPSYYEVYITNPSFNVYTDNVVWANLDLIYNNTVTLRPKLPESTCAANSMVYRFEVSIPVRPSQFVLYVRWQRIDPVGEGFYNCVDMKFKYSEGPDEEDIIEPEYEVDNEAECFAYRTNSGNVNVNPLQENKYMAYANKAIRNINTHSNGCSRNRNNKNNYNKYYSKTYNYNQNRK.

The signal sequence occupies residues 1–20 (MNKLILISLIASLYQVEVDA).

Homodimer; disulfide-linked.

This protein is a spindle body protein. This is Spindolin (SPH) from Choristoneura biennis entomopoxvirus (CbEPV).